The sequence spans 260 residues: G patch domain-containing protein 11 (260 aa).

A coiled-coil region spans residues 25-61 (MLRQIREARRKEEKRQEANLKNRQKSIKEEEQERRDM). Residues 33–60 (RRKEEKRQEANLKNRQKSIKEEEQERRD) form a disordered region. One can recognise a G-patch domain in the interval 69-115 (CENKGFALLQKMGYKSGQALGKSGDGIVEPIPLNVKTGKSGIGHETL). At Lys123 the chain carries N6-acetyllysine. Residues 187–212 (WLRPEEETEEETEEEKEQDEDEYKSE) form a disordered region. Residues 192–210 (EETEEETEEEKEQDEDEYK) are compositionally biased toward acidic residues.

It belongs to the GPATCH11 family.

The protein resides in the chromosome. The protein localises to the centromere. It is found in the kinetochore. This is G patch domain-containing protein 11 (GPATCH11) from Bos taurus (Bovine).